A 208-amino-acid polypeptide reads, in one-letter code: Holliday junction branch migration complex subunit RuvA (208 aa).

The tract at residues 1 to 67 (MIGWLHGTIG…EDGQQLYGFE (67 aa)) is domain I. A domain II region spans residues 68–146 (TKADRNLFRL…ERWQQQGGST (79 aa)). The interval 147 to 157 (PLRLVEPVAES) is flexible linker. Residues 157-208 (SRELRATLEALGYGPEEVSAAVAQAGSQGLDPEQPMEEWLRHCLAWLSRQAG) form a domain III region.

It belongs to the RuvA family. As to quaternary structure, homotetramer. Forms an RuvA(8)-RuvB(12)-Holliday junction (HJ) complex. HJ DNA is sandwiched between 2 RuvA tetramers; dsDNA enters through RuvA and exits via RuvB. An RuvB hexamer assembles on each DNA strand where it exits the tetramer. Each RuvB hexamer is contacted by two RuvA subunits (via domain III) on 2 adjacent RuvB subunits; this complex drives branch migration. In the full resolvosome a probable DNA-RuvA(4)-RuvB(12)-RuvC(2) complex forms which resolves the HJ.

Its subcellular location is the cytoplasm. The RuvA-RuvB-RuvC complex processes Holliday junction (HJ) DNA during genetic recombination and DNA repair, while the RuvA-RuvB complex plays an important role in the rescue of blocked DNA replication forks via replication fork reversal (RFR). RuvA specifically binds to HJ cruciform DNA, conferring on it an open structure. The RuvB hexamer acts as an ATP-dependent pump, pulling dsDNA into and through the RuvAB complex. HJ branch migration allows RuvC to scan DNA until it finds its consensus sequence, where it cleaves and resolves the cruciform DNA. In Synechococcus sp. (strain RCC307), this protein is Holliday junction branch migration complex subunit RuvA.